A 427-amino-acid polypeptide reads, in one-letter code: Serine--tRNA ligase (427 aa).

Residue 232 to 234 (TAE) participates in L-serine binding. 263 to 265 (RSE) provides a ligand contact to ATP. Glu286 is an L-serine binding site. Residue 350 to 353 (EISS) coordinates ATP. An L-serine-binding site is contributed by Ser385.

This sequence belongs to the class-II aminoacyl-tRNA synthetase family. Type-1 seryl-tRNA synthetase subfamily. As to quaternary structure, homodimer. The tRNA molecule binds across the dimer.

Its subcellular location is the cytoplasm. It carries out the reaction tRNA(Ser) + L-serine + ATP = L-seryl-tRNA(Ser) + AMP + diphosphate + H(+). The enzyme catalyses tRNA(Sec) + L-serine + ATP = L-seryl-tRNA(Sec) + AMP + diphosphate + H(+). It participates in aminoacyl-tRNA biosynthesis; selenocysteinyl-tRNA(Sec) biosynthesis; L-seryl-tRNA(Sec) from L-serine and tRNA(Sec): step 1/1. Its function is as follows. Catalyzes the attachment of serine to tRNA(Ser). Is also able to aminoacylate tRNA(Sec) with serine, to form the misacylated tRNA L-seryl-tRNA(Sec), which will be further converted into selenocysteinyl-tRNA(Sec). This is Serine--tRNA ligase from Aromatoleum aromaticum (strain DSM 19018 / LMG 30748 / EbN1) (Azoarcus sp. (strain EbN1)).